The chain runs to 74 residues: Translation initiation factor IF-1, chloroplastic (74 aa).

One can recognise an S1-like domain in the interval 1-72; that stretch reads MEKQNIIEME…TKGRITYRLR (72 aa).

The protein belongs to the IF-1 family. In terms of assembly, component of the 30S ribosomal translation pre-initiation complex which assembles on the 30S ribosome in the order IF-2 and IF-3, IF-1 and N-formylmethionyl-tRNA(fMet); mRNA recruitment can occur at any time during PIC assembly.

It localises to the plastid. Its subcellular location is the chloroplast. Functionally, one of the essential components for the initiation of protein synthesis. Stabilizes the binding of IF-2 and IF-3 on the 30S subunit to which N-formylmethionyl-tRNA(fMet) subsequently binds. Helps modulate mRNA selection, yielding the 30S pre-initiation complex (PIC). Upon addition of the 50S ribosomal subunit IF-1, IF-2 and IF-3 are released leaving the mature 70S translation initiation complex. This is Translation initiation factor IF-1, chloroplastic from Chlorokybus atmophyticus (Soil alga).